A 134-amino-acid chain; its full sequence is Small ribosomal subunit protein uS9 (134 aa).

The protein belongs to the universal ribosomal protein uS9 family.

The sequence is that of Small ribosomal subunit protein uS9 from Pseudothermotoga lettingae (strain ATCC BAA-301 / DSM 14385 / NBRC 107922 / TMO) (Thermotoga lettingae).